The primary structure comprises 92 residues: Small ribosomal subunit protein uS19 (92 aa).

This sequence belongs to the universal ribosomal protein uS19 family.

Functionally, protein S19 forms a complex with S13 that binds strongly to the 16S ribosomal RNA. The sequence is that of Small ribosomal subunit protein uS19 from Neisseria gonorrhoeae (strain ATCC 700825 / FA 1090).